Here is a 960-residue protein sequence, read N- to C-terminus: Protein mono-ADP-ribosyltransferase PARP10 (960 aa).

Glutamate 103 is modified (ADP-ribosyl glutamic acid). A compositionally biased stretch (polar residues) spans serine 325–leucine 341. Residues serine 325–glycine 346 are disordered. Phosphoserine occurs at positions 381 and 388. Positions serine 553–threonine 576 are disordered. The segment covering histidine 555 to proline 570 has biased composition (basic and acidic residues). A Ubiquitin-interacting motif is present at residues leucine 604–glutamine 621. Residue serine 617 is modified to Phosphoserine. Residues aspartate 649–cysteine 856 form a myc binding region. In terms of domain architecture, PARP catalytic spans proline 755 to proline 960. The PIP-box signature appears at glutamine 780–tyrosine 787. Glutamate 831 bears the ADP-ribosyl glutamic acid mark.

It belongs to the ARTD/PARP family. Interacts with MYC. Interacts with PARP14. Interacts (via-PIP box and ubiquitin-interacting motifs) with PCNA. Post-translationally, stimulated through its phosphorylation by CDK2. Acquires CDK-dependent phosphorylation through late-G1 to S phase, and from prometaphase to cytokinesis in the nucleolar organizing regions. Phosphorylation is suppressed in growth-arrested cells. Auto-mono-ADP-ribosylated on glutamate and lysine residues.

The protein localises to the cytoplasm. It localises to the nucleus. It catalyses the reaction L-lysyl-[protein] + NAD(+) = N(6)-(ADP-D-ribosyl)-L-lysyl-[protein] + nicotinamide + H(+). The enzyme catalyses L-aspartyl-[protein] + NAD(+) = 4-O-(ADP-D-ribosyl)-L-aspartyl-[protein] + nicotinamide. It carries out the reaction L-glutamyl-[protein] + NAD(+) = 5-O-(ADP-D-ribosyl)-L-glutamyl-[protein] + nicotinamide. ADP-ribosyltransferase that mediates mono-ADP-ribosylation of glutamate and aspartate residues on target proteins. In contrast to PARP1 and PARP2, it is not able to mediate poly-ADP-ribosylation. Catalyzes mono-ADP-ribosylation of GSK3B, leading to negatively regulate GSK3B kinase activity. Involved in translesion DNA synthesis in response to DNA damage via its interaction with PCNA. The protein is Protein mono-ADP-ribosyltransferase PARP10 of Mus musculus (Mouse).